We begin with the raw amino-acid sequence, 140 residues long: Large-conductance mechanosensitive channel (140 aa).

Helical transmembrane passes span 9-29 (AFAL…GAAF) and 86-106 (GSFL…FLMV).

This sequence belongs to the MscL family. As to quaternary structure, homopentamer.

The protein resides in the cell inner membrane. Functionally, channel that opens in response to stretch forces in the membrane lipid bilayer. May participate in the regulation of osmotic pressure changes within the cell. In Anaeromyxobacter dehalogenans (strain 2CP-1 / ATCC BAA-258), this protein is Large-conductance mechanosensitive channel.